Consider the following 555-residue polypeptide: Chaperonin GroEL (555 aa).

Residues 29 to 32 (TLGP), K50, 86 to 90 (DGTTT), G418, and D499 contribute to the ATP site. The disordered stretch occupies residues 528–555 (HEEDNNTGNRSGGGVGGGHHGGMGGMDF). Positions 537 to 555 (RSGGGVGGGHHGGMGGMDF) are enriched in gly residues.

The protein belongs to the chaperonin (HSP60) family. Forms a cylinder of 14 subunits composed of two heptameric rings stacked back-to-back. Interacts with the co-chaperonin GroES.

It localises to the cytoplasm. It carries out the reaction ATP + H2O + a folded polypeptide = ADP + phosphate + an unfolded polypeptide.. Its function is as follows. Together with its co-chaperonin GroES, plays an essential role in assisting protein folding. The GroEL-GroES system forms a nano-cage that allows encapsulation of the non-native substrate proteins and provides a physical environment optimized to promote and accelerate protein folding. In Orientia tsutsugamushi (Rickettsia tsutsugamushi), this protein is Chaperonin GroEL.